The primary structure comprises 779 residues: Pleckstrin homology domain-containing family A member 4 (779 aa).

Residues 54–153 (PVHIRGWLHK…WLRALGKASR (100 aa)) enclose the PH domain. 3 disordered regions span residues 152–355 (SRAE…LPGP), 495–669 (AGLG…SGGH), and 694–766 (SPER…QEEG). At Ser164 the chain carries Phosphoserine. The span at 183–193 (VNRREEGRTSE) shows a compositional bias: basic and acidic residues. 2 stretches are compositionally biased toward low complexity: residues 246 to 259 (PRPRSAPVRRPPLS) and 324 to 334 (QSTQVSSGSST). A compositionally biased stretch (basic and acidic residues) spans 517–527 (QREESSERESL). The segment covering 528–540 (SESLELSSPQSPE) has biased composition (low complexity). Phosphoserine is present on Ser562. The span at 567–580 (RASSPECRQQSSPL) shows a compositional bias: polar residues. 2 stretches are compositionally biased toward low complexity: residues 608–627 (GLSLPRPTSPRLLTLGRTLS) and 649–659 (SSGSWSSPRHS). Residues 720 to 740 (VTSSPTSHKANSATTGFSCQG) are compositionally biased toward polar residues.

It is found in the cytoplasm. The protein localises to the membrane. Functionally, binds specifically to phosphatidylinositol 3-phosphate (PtdIns3P), but not to other phosphoinositides. This Rattus norvegicus (Rat) protein is Pleckstrin homology domain-containing family A member 4 (Plekha4).